We begin with the raw amino-acid sequence, 246 residues long: Endonuclease V (246 aa).

Mg(2+) is bound by residues aspartate 50 and aspartate 120.

The protein belongs to the endonuclease V family. It depends on Mg(2+) as a cofactor.

The protein localises to the cytoplasm. The enzyme catalyses Endonucleolytic cleavage at apurinic or apyrimidinic sites to products with a 5'-phosphate.. Functionally, DNA repair enzyme involved in the repair of deaminated bases. Selectively cleaves double-stranded DNA at the second phosphodiester bond 3' to a deoxyinosine leaving behind the intact lesion on the nicked DNA. The sequence is that of Endonuclease V from Gloeobacter violaceus (strain ATCC 29082 / PCC 7421).